We begin with the raw amino-acid sequence, 468 residues long: Glutamate--tRNA ligase (468 aa).

Positions 9–19 (PSPTGYLHVGG) match the 'HIGH' region motif. Residues Cys-98, Cys-100, Cys-125, and Asp-127 each contribute to the Zn(2+) site. Positions 235–239 (KLSKR) match the 'KMSKS' region motif. Lys-238 lines the ATP pocket.

It belongs to the class-I aminoacyl-tRNA synthetase family. Glutamate--tRNA ligase type 1 subfamily. As to quaternary structure, monomer. The cofactor is Zn(2+).

The protein localises to the cytoplasm. The catalysed reaction is tRNA(Glu) + L-glutamate + ATP = L-glutamyl-tRNA(Glu) + AMP + diphosphate. In terms of biological role, catalyzes the attachment of glutamate to tRNA(Glu) in a two-step reaction: glutamate is first activated by ATP to form Glu-AMP and then transferred to the acceptor end of tRNA(Glu). In Idiomarina loihiensis (strain ATCC BAA-735 / DSM 15497 / L2-TR), this protein is Glutamate--tRNA ligase.